The primary structure comprises 519 residues: Protein nucleotidyltransferase YdiU (519 aa).

Gly-101, Gly-103, Arg-104, Lys-124, Asp-136, Gly-137, Arg-194, and Arg-201 together coordinate ATP. The active-site Proton acceptor is the Asp-271. Mg(2+) contacts are provided by Asn-272 and Asp-281. Asp-281 is a binding site for ATP.

This sequence belongs to the SELO family. The cofactor is Mg(2+). Requires Mn(2+) as cofactor.

The enzyme catalyses L-seryl-[protein] + ATP = 3-O-(5'-adenylyl)-L-seryl-[protein] + diphosphate. It catalyses the reaction L-threonyl-[protein] + ATP = 3-O-(5'-adenylyl)-L-threonyl-[protein] + diphosphate. It carries out the reaction L-tyrosyl-[protein] + ATP = O-(5'-adenylyl)-L-tyrosyl-[protein] + diphosphate. The catalysed reaction is L-histidyl-[protein] + UTP = N(tele)-(5'-uridylyl)-L-histidyl-[protein] + diphosphate. The enzyme catalyses L-seryl-[protein] + UTP = O-(5'-uridylyl)-L-seryl-[protein] + diphosphate. It catalyses the reaction L-tyrosyl-[protein] + UTP = O-(5'-uridylyl)-L-tyrosyl-[protein] + diphosphate. In terms of biological role, nucleotidyltransferase involved in the post-translational modification of proteins. It can catalyze the addition of adenosine monophosphate (AMP) or uridine monophosphate (UMP) to a protein, resulting in modifications known as AMPylation and UMPylation. This Azoarcus sp. (strain BH72) protein is Protein nucleotidyltransferase YdiU.